The sequence spans 103 residues: Large ribosomal subunit protein uL24 (103 aa).

This sequence belongs to the universal ribosomal protein uL24 family. As to quaternary structure, part of the 50S ribosomal subunit.

Its function is as follows. One of two assembly initiator proteins, it binds directly to the 5'-end of the 23S rRNA, where it nucleates assembly of the 50S subunit. One of the proteins that surrounds the polypeptide exit tunnel on the outside of the subunit. The sequence is that of Large ribosomal subunit protein uL24 from Bacillus anthracis (strain A0248).